Reading from the N-terminus, the 156-residue chain is Histone H2B.2 (156 aa).

Basic and acidic residues-rich tracts occupy residues M1–A10 and A24–K58. The segment at M1 to K63 is disordered. N6-acetyllysine is present on residues K40 and K41. K152 is covalently cross-linked (Glycyl lysine isopeptide (Lys-Gly) (interchain with G-Cter in ubiquitin)).

The protein belongs to the histone H2B family. As to quaternary structure, the nucleosome is a histone octamer containing two molecules each of H2A, H2B, H3 and H4 assembled in one H3-H4 heterotetramer and two H2A-H2B heterodimers. The octamer wraps approximately 147 bp of DNA. Post-translationally, the N-terminus is blocked. Can be acetylated to form H2BK33ac and H2BK34ac. Acetylated mainly on the ubiquitinated form. In terms of processing, monoubiquitinated to form H2BK143ub1; which is increased during the light period and may give a specific tag for epigenetic transcriptional activation.

The protein resides in the nucleus. The protein localises to the chromosome. Core component of nucleosome. Nucleosomes wrap and compact DNA into chromatin, limiting DNA accessibility to the cellular machineries which require DNA as a template. Histones thereby play a central role in transcription regulation, DNA repair, DNA replication and chromosomal stability. DNA accessibility is regulated via a complex set of post-translational modifications of histones, also called histone code, and nucleosome remodeling. The sequence is that of Histone H2B.2 from Chlamydomonas reinhardtii (Chlamydomonas smithii).